The primary structure comprises 95 residues: MDFNTSLRRAIKTGKVILGQNETKDSIEKGSAKLVVVAANCPAEFSGYLSGKDGVKTYTYEGSGVQLGRACGKPFIVSALAIEESGDSDILTLSR.

It belongs to the eukaryotic ribosomal protein eL30 family.

The chain is Large ribosomal subunit protein eL30 from Methanospirillum hungatei JF-1 (strain ATCC 27890 / DSM 864 / NBRC 100397 / JF-1).